A 235-amino-acid chain; its full sequence is Ubiquinone biosynthesis O-methyltransferase (235 aa).

4 residues coordinate S-adenosyl-L-methionine: Arg39, Gly59, Asp80, and Met124.

The protein belongs to the methyltransferase superfamily. UbiG/COQ3 family.

It catalyses the reaction a 3-demethylubiquinol + S-adenosyl-L-methionine = a ubiquinol + S-adenosyl-L-homocysteine + H(+). The catalysed reaction is a 3-(all-trans-polyprenyl)benzene-1,2-diol + S-adenosyl-L-methionine = a 2-methoxy-6-(all-trans-polyprenyl)phenol + S-adenosyl-L-homocysteine + H(+). Its pathway is cofactor biosynthesis; ubiquinone biosynthesis. O-methyltransferase that catalyzes the 2 O-methylation steps in the ubiquinone biosynthetic pathway. The chain is Ubiquinone biosynthesis O-methyltransferase from Vibrio parahaemolyticus serotype O3:K6 (strain RIMD 2210633).